We begin with the raw amino-acid sequence, 260 residues long: Transmembrane protein 106C (260 aa).

The N-myristoyl glycine moiety is linked to residue glycine 2. Residues 85–105 (YVLLSVLLCLLASGLVFFFLF) form a helical membrane-spanning segment. Residue asparagine 184 is glycosylated (N-linked (GlcNAc...) asparagine). Residues 196–216 (SYVYFYCTLPAIRVHNIVIFM) form a helical membrane-spanning segment.

Belongs to the TMEM106 family. In terms of assembly, interacts with TMEM106B.

The protein localises to the endoplasmic reticulum membrane. The protein resides in the membrane. The protein is Transmembrane protein 106C (Tmem106c) of Mus musculus (Mouse).